We begin with the raw amino-acid sequence, 67 residues long: Protein DsrB (67 aa).

The protein belongs to the DsrB family.

In Pectobacterium carotovorum subsp. carotovorum (strain PC1), this protein is Protein DsrB.